A 293-amino-acid chain; its full sequence is Elongation factor Ts (293 aa).

An involved in Mg(2+) ion dislocation from EF-Tu region spans residues 80–83 (TDFV).

The protein belongs to the EF-Ts family.

It is found in the cytoplasm. In terms of biological role, associates with the EF-Tu.GDP complex and induces the exchange of GDP to GTP. It remains bound to the aminoacyl-tRNA.EF-Tu.GTP complex up to the GTP hydrolysis stage on the ribosome. The polypeptide is Elongation factor Ts (Staphylococcus aureus (strain Mu3 / ATCC 700698)).